A 349-amino-acid polypeptide reads, in one-letter code: Microbial Terpene synthase-like protein 1 (349 aa).

Residues Asp-98, Asp-102, Asn-243, and Ser-247 each contribute to the Mg(2+) site. Residues 98 to 102 (DDILD) carry the DDXXD motif motif.

This sequence belongs to the terpene synthase family. The cofactor is Mg(2+).

It participates in secondary metabolite biosynthesis; terpenoid biosynthesis. Its function is as follows. Sesquiterpene synthase converting farnesyl diphosphate to six sesquiterpenes, with beta-elemene, delta-cadinene and an unidentified oxygenated sesquiterpene as the major products. Has no diterpene synthase activity. This Selaginella moellendorffii (Spikemoss) protein is Microbial Terpene synthase-like protein 1.